The following is a 176-amino-acid chain: Peptide deformylase (176 aa).

Fe cation-binding residues include Cys94 and His136. Glu137 is an active-site residue. His140 contacts Fe cation.

Belongs to the polypeptide deformylase family. Fe(2+) is required as a cofactor.

It catalyses the reaction N-terminal N-formyl-L-methionyl-[peptide] + H2O = N-terminal L-methionyl-[peptide] + formate. Its function is as follows. Removes the formyl group from the N-terminal Met of newly synthesized proteins. Requires at least a dipeptide for an efficient rate of reaction. N-terminal L-methionine is a prerequisite for activity but the enzyme has broad specificity at other positions. In Mesorhizobium japonicum (strain LMG 29417 / CECT 9101 / MAFF 303099) (Mesorhizobium loti (strain MAFF 303099)), this protein is Peptide deformylase.